Consider the following 476-residue polypeptide: Cysteine--tRNA ligase (476 aa).

Residue Cys36 participates in Zn(2+) binding. The 'HIGH' region motif lies at 38–48; that stretch reads PTVYDYAHIGN. Cys221, His246, and Glu250 together coordinate Zn(2+). The short motif at 278 to 282 is the 'KMSKS' region element; it reads KMSKS. Lys281 serves as a coordination point for ATP.

Belongs to the class-I aminoacyl-tRNA synthetase family. As to quaternary structure, monomer. It depends on Zn(2+) as a cofactor.

The protein resides in the cytoplasm. It catalyses the reaction tRNA(Cys) + L-cysteine + ATP = L-cysteinyl-tRNA(Cys) + AMP + diphosphate. This is Cysteine--tRNA ligase from Chlamydia felis (strain Fe/C-56) (Chlamydophila felis).